A 3595-amino-acid chain; its full sequence is Replicase polyprotein 1ab (3595 aa).

Residues cysteine 3–cysteine 23 form a C4-type; atypical zinc finger. The Peptidase C31 domain maps to serine 56–glycine 164. Residues cysteine 63 and histidine 130 each act as for Nsp1-alpha papain-like cysteine proteinase activity in the active site. The 112-residue stretch at leucine 239–glycine 350 folds into the Peptidase C32 domain. Catalysis depends on for Nsp1-beta papain-like cysteine proteinase activity residues cysteine 246 and histidine 309. Active-site for Nsp2 cysteine proteinase activity residues include cysteine 378 and histidine 430. Residues arginine 482–lysine 527 form a disordered region. Positions lysine 511 to alanine 520 are enriched in basic and acidic residues. The Peptidase C33 domain occupies threonine 633–glutamate 736. The disordered stretch occupies residues glutamine 808–proline 862. Residues aspartate 851 to arginine 860 are compositionally biased toward basic and acidic residues. A run of 7 helical transmembrane segments spans residues methionine 922–isoleucine 942, isoleucine 951–serine 971, valine 1019–valine 1039, isoleucine 1239–valine 1259, proline 1316–isoleucine 1336, alanine 1345–alanine 1365, and alanine 1381–leucine 1401. The interval methionine 922–valine 1039 is HD1. An HD2 region spans residues isoleucine 1239–tryptophan 1399. Residues glycine 1464–glutamate 1664 enclose the Peptidase S32 domain. Catalysis depends on charge relay system; for 3C-like serine proteinase activity residues histidine 1502, aspartate 1527, and serine 1580. Helical transmembrane passes span isoleucine 1673–valine 1693, tyrosine 1711–isoleucine 1731, alanine 1744–glycine 1764, and alanine 1784–phenylalanine 1804. The segment at leucine 1687–phenylalanine 1804 is HD3. The NiRAN domain occupies aspartate 2083–glycine 2253. A RdRp catalytic domain is found at glycine 2491–phenylalanine 2625. The AV ZBD domain occupies glycine 2746 to phenylalanine 2812. Cysteine 2752, cysteine 2755, cysteine 2765, cysteine 2770, cysteine 2773, histidine 2777, histidine 2779, cysteine 2782, cysteine 2789, histidine 2791, cysteine 2798, and cysteine 2801 together coordinate Zn(2+). One can recognise a (+)RNA virus helicase ATP-binding domain in the interval aspartate 2862–leucine 3022. Residue glycine 2897–threonine 2904 participates in ATP binding. The 135-residue stretch at histidine 3023–aspartate 3157 folds into the (+)RNA virus helicase C-terminal domain. In terms of domain architecture, AV-Nsp11N/CoV-Nsp15M spans serine 3196 to valine 3292. In terms of domain architecture, NendoU spans methionine 3294–phenylalanine 3416. Catalysis depends on residues histidine 3325, histidine 3340, and lysine 3369.

It belongs to the arteriviridae polyprotein family. Post-translationally, specific enzymatic cleavages in vivo by its own proteases yield mature proteins. There are two alternative pathways for processing. Either nsp4-5 is cleaved, which represents the major pathway or the nsp5-6 and nsp6-7 are processed, which represents the minor pathway. The major pathway occurs when nsp2 acts as a cofactor for nsp4.

The protein resides in the host membrane. Its subcellular location is the host cytoplasm. The protein localises to the host perinuclear region. The enzyme catalyses RNA(n) + a ribonucleoside 5'-triphosphate = RNA(n+1) + diphosphate. The catalysed reaction is ATP + H2O = ADP + phosphate + H(+). It carries out the reaction uridylyl-uridylyl-ribonucleotide-RNA = a 3'-end uridylyl-2',3'-cyclophospho-uridine-RNA + a 5'-end dephospho-ribonucleoside-RNA. Its function is as follows. The replicase polyprotein 1ab is a multifunctional protein: it contains the activities necessary for the transcription of negative stranded RNA, leader RNA, subgenomic mRNAs and progeny virion RNA as well as proteinases responsible for the cleavage of the polyprotein into functional products. The Nsp1 chain is essential for viral subgenomic mRNA synthesis. Functionally, the 3C-like serine proteinase chain is responsible for the majority of cleavages as it cleaves the C-terminus of the polyprotein. In terms of biological role, plays a role in viral transcription/replication and prevents the simultaneous activation of host cell dsRNA sensors, such as MDA5/IFIH1, OAS, and PKR. Acts by degrading the 5'-polyuridines generated during replication of the poly(A) region of viral genomic and subgenomic RNAs. Catalyzes a two-step reaction in which a 2'3'-cyclic phosphate (2'3'-cP) is first generated by 2'-O transesterification, which is then hydrolyzed to a 3'-phosphate (3'-P). If not degraded, poly(U) RNA would hybridize with poly(A) RNA tails and activate host dsRNA sensors. Its function is as follows. The helicase chain, which contains a zinc finger structure, displays RNA and DNA duplex-unwinding activities with 5' to 3' polarity. The chain is Replicase polyprotein 1ab (rep) from Simian hemorrhagic fever virus (SHFV).